We begin with the raw amino-acid sequence, 488 residues long: 5'-3' exonuclease PLD3 (488 aa).

Residues 1–38 (MKPKLMYQELKVPVEEPAGELPMNEIEAWKAAEKKARW) lie on the Cytoplasmic side of the membrane. A helical; Signal-anchor for type II membrane protein membrane pass occupies residues 39-59 (VLLVLILAVVGFGALMTQLFL). At 60-488 (WEYGDLHLFG…DSVGNACRLL (429 aa)) the chain is on the lumenal side. Cystine bridges form between cysteine 77–cysteine 237 and cysteine 81–cysteine 235. N-linked (GlcNAc...) asparagine glycans are attached at residues asparagine 97 and asparagine 132. The region spanning 194–221 (THGVLHTKFWVVDQTHFYLGSANMDWRS) is the PLD phosphodiesterase 1 domain. Active-site residues include histidine 199, lysine 201, and aspartate 206. Histidine 199 (proton donor) is an active-site residue. Phosphate-binding residues include histidine 199 and lysine 201. Residue asparagine 216 coordinates phosphate. Asparagine 234, asparagine 282, and asparagine 385 each carry an N-linked (GlcNAc...) asparagine glycan. A disulfide bridge links cysteine 364 with cysteine 485. Residues 409–435 (YARVNHNKYMVTERTTYIGTSNWSGSY) enclose the PLD phosphodiesterase 2 domain. Phosphate is bound at residue histidine 414. Catalysis depends on histidine 414, which acts as the Nucleophile. Phenylalanine 436 provides a ligand contact to Mg(2+).

It belongs to the phospholipase D family. Homodimer. Interacts with APP. In terms of processing, N-glycosylated. Post-translationally, proteolytically processed to a soluble form that is stable within endosomes and lysosomes. During transport through the secretory pathway becomes proteolysed by cysteine proteases, thereby releasing a stable soluble lysosomal lumenal polypeptide, whereas the transmembrane-bound fragment is rapidly degraded. Its transport route to lysosomes involves ubiquitination and the ESCRT complex. Ubiquitinated. Ubiquitination mediates sorting into lysosomes.

It localises to the endoplasmic reticulum membrane. The protein localises to the lysosome lumen. Its subcellular location is the early endosome membrane. The protein resides in the late endosome membrane. It is found in the golgi apparatus membrane. It localises to the endosome membrane. It carries out the reaction Exonucleolytic cleavage in the 5'- to 3'-direction to yield nucleoside 3'-phosphates.. It catalyses the reaction a 5'-end 5'-dephospho-ribonucleotidyl-ribonucleotide-RNA + H2O = a ribonucleoside 3'-phosphate + a 5'-end dephospho-ribonucleoside-RNA + H(+). The enzyme catalyses a ribonucleoside 3'-phosphate-2'-3'-cyclophospho-GMP + H2O = a ribonucleoside 3'-phosphate + 2',3'-cyclophospho-GMP + H(+). The catalysed reaction is a 5'-end 5'-dephospho-2'-deoxyribonucleotidyl-2'-deoxyribonucleotide in single-stranded DNA + H2O = a 5'-end dephospho-2'-deoxyribonucleoside in single-stranded DNA + a 2'-deoxyribonucleoside 3'-phosphate + H(+). It carries out the reaction a 5'-end 5'-phospho-2'-deoxyribonucleotide in single-stranded DNA + H2O = a 5'-end 5'-dephospho-2'-deoxyribonucleotide in single-stranded DNA + phosphate. It catalyses the reaction a 3-lyso-sn-glycero-1-phospho-(3'-acyl-1'-sn-glycerol) + a 1-acyl-sn-glycerol = a 3-acyl-sn-glycero-1-phospho-(3'-acyl-1'-sn-glycerol) + glycerol. The enzyme catalyses 3-lyso-sn-glycero-1-phospho-(3'-(9Z-octadecenoyl)-1'-sn-glycerol) + 1-(9Z-octadecenoyl)-sn-glycerol = 3-(9Z-octadecenoyl)-sn-glycero-1-phospho-(3'-(9Z-octadecenoyl)-1'-sn-glycerol) + glycerol. 5'-&gt;3' exonuclease that hydrolyzes the phosphodiester bond of single-stranded DNA (ssDNA) and RNA molecules to form nucleoside 3'-monophosphates and 5'-end 5'-hydroxy deoxyribonucleotide/ribonucleotide fragments. Partially redundant with PLD4, can cleave all four nucleotides displaying higher efficiency for ssDNA and RNA fragments initiated with uridine and guanosine residues and lower efficiency for cytidine-initiated substrates. As a result, it does not always degrade polynucleotides to the single nucleotide level, it can stall at specific sites sparing certain fragments from exonucleolytic degradation. Processes self and pathogenic ssDNA and RNA molecules that reach the endolysosomal compartment via phagocytosis or autophagy and may serve as 'danger' signals for recognition by innate immune receptors such as toll-like receptors (TLRs). Degrades mitochondrial CpG-rich ssDNA fragments to prevent TLR9 activation and autoinflammatory response, but it can cleave viral RNA to generate ligands for TLR7 activation and initiate antiviral immune responses. In plasmacytoid dendritic cells, it cooperates with endonuclease RNASET2 to release 2',3'-cyclic guanosine monophosphate (2',3'-cGMP), a potent stimulatory ligand for TLR7. Produces 2',3'-cGMPs and cytidine-rich RNA fragments that occupy TLR7 ligand-binding pockets and trigger a signaling-competent state. Can exert polynucleotide phosphatase activity toward 5'-phosphorylated ssDNA substrates although at a slow rate. Transphosphatidylase that catalyzes the exchange with R to S stereo-inversion of the glycerol moiety between (S,R)-lysophosphatidylglycerol (LPG) and monoacylglycerol (MAG) substrates to yield (S,S)-bis(monoacylglycero)phosphate (BMP). Can synthesize a variety of (S,S)-BMPs representing the main phospholipid constituent of lysosomal intralumenal vesicle (ILV) membranes that bind acid hydrolases for lipid degradation. Regulates the homeostasis and interorganellar communication of the endolysosomal system with an overall impact on cellular removal of dysfunctional organelles via autophagy as well as proper protein and lipid turnover. May play a role in myotube formation in response to ER stress. The sequence is that of 5'-3' exonuclease PLD3 (Pld3) from Rattus norvegicus (Rat).